The sequence spans 689 residues: Solute carrier family 22 member 23 (689 aa).

Disordered regions lie at residues 1–55 (MAID…PLPA) and 162–188 (TASW…GKGN). A glycan (N-linked (GlcNAc...) asparagine) is linked at N24. Polar residues predominate over residues 165–177 (WGTTSNRSNSSDT). 2 helical membrane-spanning segments follow: residues 229-249 (FSLL…ADWV) and 253-273 (PVLL…ALSV). The N-linked (GlcNAc...) asparagine glycan is linked to N274. Transmembrane regions (helical) follow at residues 283–303 (FFEG…RIEL), 310–330 (FIIT…MPGL), 339–359 (VLQA…SIFP), 466–486 (TMAS…KFLG), 489–509 (GGLL…LGLL), 541–561 (IAFS…SVFF), 572–592 (CGGL…APII), and 601–621 (FLHH…ILLL).

It belongs to the major facilitator (TC 2.A.1) superfamily. Organic cation transporter (TC 2.A.1.19) family.

Its subcellular location is the membrane. The protein is Solute carrier family 22 member 23 (Slc22a23) of Mus musculus (Mouse).